Consider the following 813-residue polypeptide: Leucine--tRNA ligase (813 aa).

The short motif at 42-52 (PYTSGNLHIGH) is the 'HIGH' region element. The short motif at 580–584 (KMSKS) is the 'KMSKS' region element. K583 provides a ligand contact to ATP.

Belongs to the class-I aminoacyl-tRNA synthetase family.

The protein resides in the cytoplasm. The enzyme catalyses tRNA(Leu) + L-leucine + ATP = L-leucyl-tRNA(Leu) + AMP + diphosphate. The sequence is that of Leucine--tRNA ligase from Dehalococcoides mccartyi (strain ATCC BAA-2266 / KCTC 15142 / 195) (Dehalococcoides ethenogenes (strain 195)).